Reading from the N-terminus, the 431-residue chain is tRNA(Ile)-lysidine synthase (431 aa).

19-24 (STGIDS) is an ATP binding site.

This sequence belongs to the tRNA(Ile)-lysidine synthase family.

The protein resides in the cytoplasm. The enzyme catalyses cytidine(34) in tRNA(Ile2) + L-lysine + ATP = lysidine(34) in tRNA(Ile2) + AMP + diphosphate + H(+). Ligates lysine onto the cytidine present at position 34 of the AUA codon-specific tRNA(Ile) that contains the anticodon CAU, in an ATP-dependent manner. Cytidine is converted to lysidine, thus changing the amino acid specificity of the tRNA from methionine to isoleucine. The chain is tRNA(Ile)-lysidine synthase from Staphylococcus aureus (strain COL).